A 1793-amino-acid polypeptide reads, in one-letter code: MTNPRMSMYSLASEAPGGNRGTGQQSTQVSTTTLLNAIHNIYLSAQPYRLDAGTSTVVNTWLTASQTGPNGSIGGTVDASLGASAWEHARRRAEDGCIVLGSLHESTPSVLAPFLSSLPMSTPSSLYKALDAIQPFLRCSTPYNPSTPRQAALGVTLTINLAGNLTAASIALSQGGIDTTKGLMNIPSEAGYRAFDVFYYLLTSASTPAEREFLGLKPASQYALLARSGTYDPPSYLPTADDAAAAEDFRTALKEIGIKGASHRSFISTLAGLLKLGNTLDYNVDEDVLEDVCEDVSGLLGMEPEVLMKQCTTEDRSTFVGGLYEALVDWVITKANVAIAAQMARIKDGAESLDGRGVRTPTSNEEGEDTVCISVIEIPNPTLGKALALRGIFDDSMGINSEMIADGIEVPATGSSVLREMQNAVAEVAPDLGISSTPASRERQHELEKREEILEKIGLSADDDGFIKQLLFPVAGEGINLGTHSRLDLPALLASSRVWYHLSLHPTDDSPASLAALPSVTSAWSAGTVSRQLRAWRLPEWANRRNKNLDFTADFDVEEFVQRYSALGCKDGRDGIETWLLERGWSNGEVIVGKERVWMRESAWWEAESMLDLKPLNNLPGVGNMMAVNQLESGYSNNGSGYFPGQVILDDHSGSNGVVNHQRNFSHGNMSQATFNQNPVAAPSIAPTRMTGMTGMRNVAVGDYGLGHKGDTHKGAVYYNEDGEFIGPLDPELANGKQIETKSLPMKRRVWVFIVWAFTWWIPSPLLRYVGRMKRPDVRMAWREKLVLCFFIFLMNALIVFWIVAFGRLLCPNFDKAYSQKEVDTHQGQSDFWVSIHGKVYDISKFWKQQHSDQDIETTRENMLPLAGMNLDDYFVAPLPLTCPGLDIEDTFRLDLNNTLEFQIADHTSGYYQPNPATKLRAADWYSKRFEPRIKEYFHGDLVWSKGTVRKQGENDGRQWVIYDDKIYDLTNYFYTQKRLKNLGGSNFLNEKLINVIKQNPGADVTDQWNDILERAAGNATENQSAQNSMNCIRNTFYKGITDFRETPRCTVNNWLLLAFSIMLCAVILLKFVSALQFGSKRRPSPQDKFVICQVPAYTEGEESLRKALDSLTALQYDNKRKLICVICDGVIVGQGNDRPTPKIVLDILGVDPKIDPPALAFKSVGTGSEQLNYGKVYSGLYEFEGNVVPYLVVVKVGKESEQSKTKPGNRGKRDSQILLMSFLNRVHHRSPMNPLELEMFHQINNIIGVDPELYEYLFMVDADTSVREDSLNRLVAACANDGKIAGICGETALQNDEKTWWTMIQVYEYFISHHLAKAFESLFGSVTCLPGCFTMYRLRTADKGKPLIISDGVIQEYSVCDVDTLHKKNLLALGEDRYLTTLMTKHFPFMSYKFIPDAYCQTAAPESWSVLLSQRRRWINSTMHNLFELMQLKEMCGFCCFSMRFVVFIDLFGTIILPATCVYLGYLIYLVSSGTGQFPLISIIMLAAVYGLQALIFILKRQWQHIGWMIIYILAFPIYSFVLPIYSFWNQDNFSWGNTRIVIGEKGNKQIVAVDDEGYDPRSVPLQRWDDYAQANQLPGRRGGYPEKYEGEYQDQYEMDEMKSVYSSVRQGSVITGMQNRQNPYMPPQSPALFGTPSPGHMTRHSTMTGAGPFADPHLAHRQSMASMGAHDIQRTQSPYADYPTRSMGNLHGHASNPSLMGGNRSSTALGFAGGNRAAEASSSTFDFQRGLAGPDDGMIVEAIRTVLMEVDLDTVTKKQVRALVEQRLQSELVGERRTFMDRQIDHELANM.

The disordered stretch occupies residues M1–Q28. N-linked (GlcNAc...) asparagine glycosylation is found at N70, N164, N638, N664, and N669. The next 2 membrane-spanning stretches (helical) occupy residues V750–V770 and L786–F806. A Cytochrome b5 heme-binding domain is found at D815–A877. N897, N1019, and N1023 each carry an N-linked (GlcNAc...) asparagine glycan. Residues L1056–L1076 form a helical membrane-spanning segment. The N-linked (GlcNAc...) asparagine glycan is linked to N1421. 3 consecutive transmembrane segments (helical) span residues L1452 to V1472, F1479 to I1499, and I1507 to Y1527. N1534 and N1705 each carry an N-linked (GlcNAc...) asparagine glycan. In terms of domain architecture, DEK-C spans G1735–A1791.

This sequence belongs to the chitin synthase family. Class V subfamily.

It localises to the cell membrane. The enzyme catalyses [(1-&gt;4)-N-acetyl-beta-D-glucosaminyl](n) + UDP-N-acetyl-alpha-D-glucosamine = [(1-&gt;4)-N-acetyl-beta-D-glucosaminyl](n+1) + UDP + H(+). In terms of biological role, polymerizes chitin, a structural polymer of the cell wall and septum, by transferring the sugar moiety of UDP-GlcNAc to the non-reducing end of the growing chitin polymer. Regulates Germination and Tolerance to Hyperosmotic Stress. Plays a key role in pathogenicity. Likely contributes to post-penetration virulence. This Verticillium dahliae (strain VdLs.17 / ATCC MYA-4575 / FGSC 10137) (Verticillium wilt) protein is Chitin synthase 5.